The chain runs to 196 residues: Imidazole glycerol phosphate synthase subunit HisH (196 aa).

Residues N2–I196 form the Glutamine amidotransferase type-1 domain. C77 functions as the Nucleophile in the catalytic mechanism. Catalysis depends on residues H178 and E180.

Heterodimer of HisH and HisF.

Its subcellular location is the cytoplasm. It carries out the reaction 5-[(5-phospho-1-deoxy-D-ribulos-1-ylimino)methylamino]-1-(5-phospho-beta-D-ribosyl)imidazole-4-carboxamide + L-glutamine = D-erythro-1-(imidazol-4-yl)glycerol 3-phosphate + 5-amino-1-(5-phospho-beta-D-ribosyl)imidazole-4-carboxamide + L-glutamate + H(+). It catalyses the reaction L-glutamine + H2O = L-glutamate + NH4(+). The protein operates within amino-acid biosynthesis; L-histidine biosynthesis; L-histidine from 5-phospho-alpha-D-ribose 1-diphosphate: step 5/9. Its function is as follows. IGPS catalyzes the conversion of PRFAR and glutamine to IGP, AICAR and glutamate. The HisH subunit catalyzes the hydrolysis of glutamine to glutamate and ammonia as part of the synthesis of IGP and AICAR. The resulting ammonia molecule is channeled to the active site of HisF. The polypeptide is Imidazole glycerol phosphate synthase subunit HisH (Blochmanniella pennsylvanica (strain BPEN)).